The primary structure comprises 456 residues: MKKNTGTIISISGFVLKIEFNESELPEIGFALEYHTHQGTYLAEVVQHTGINTVSAIAIGEVSGLARGTEVVNLGHPIEVPVGETVQGRMLNVYGKAIDGKPEPAAEVKWPIFRDQPLLRELDTNKEILYTGIKVIDLICPILKGGKTGLFGGAGVGKSVLMQELINNISMLGGNSVFTGVGERVREGIGLYKELEASGVLPQTTVVLGQMNESPGVRMRVALTGLTIAEYLRDEEKKDVLLFIDNVFRFIQAGSEVSSLQGKIPITGGYQSTLSKEVGDFQDRIASTKNGSITSIQCVFLPADDIDDPSAVATFSHLDSTIVLERSIAALGIFPAVNPLQSFSRALNPTFVGERHYQLAAQVKFILQRYMELQEIINVLGMAELSDEDRKLVHRARKIRNFLSQPFYVSEKFTGTEGTFVEIEDLLGSIERILNGDYDERSERDFLFIGSYKDLK.

Gly-152–Ser-159 contacts ATP.

Belongs to the ATPase alpha/beta chains family. F-type ATPases have 2 components, CF(1) - the catalytic core - and CF(0) - the membrane proton channel. CF(1) has five subunits: alpha(3), beta(3), gamma(1), delta(1), epsilon(1). CF(0) has three main subunits: a(1), b(2) and c(9-12). The alpha and beta chains form an alternating ring which encloses part of the gamma chain. CF(1) is attached to CF(0) by a central stalk formed by the gamma and epsilon chains, while a peripheral stalk is formed by the delta and b chains.

The protein resides in the cell membrane. The catalysed reaction is ATP + H2O + 4 H(+)(in) = ADP + phosphate + 5 H(+)(out). Produces ATP from ADP in the presence of a proton gradient across the membrane. The catalytic sites are hosted primarily by the beta subunits. The sequence is that of ATP synthase subunit beta 1 from Listeria monocytogenes serotype 4b (strain F2365).